We begin with the raw amino-acid sequence, 392 residues long: Dual-specificity RNA methyltransferase RlmN (392 aa).

Catalysis depends on Glu-115, which acts as the Proton acceptor. The Radical SAM core domain maps to 121–358; sequence EVDRGTLCIS…YKAGYASPIR (238 aa). Cys-128 and Cys-369 are oxidised to a cystine. [4Fe-4S] cluster-binding residues include Cys-135, Cys-139, and Cys-142. S-adenosyl-L-methionine-binding positions include 195–196, Ser-227, 249–251, and Asn-326; these read GE and SFH. The active-site S-methylcysteine intermediate is the Cys-369.

This sequence belongs to the radical SAM superfamily. RlmN family. [4Fe-4S] cluster is required as a cofactor.

It is found in the cytoplasm. The catalysed reaction is adenosine(2503) in 23S rRNA + 2 reduced [2Fe-2S]-[ferredoxin] + 2 S-adenosyl-L-methionine = 2-methyladenosine(2503) in 23S rRNA + 5'-deoxyadenosine + L-methionine + 2 oxidized [2Fe-2S]-[ferredoxin] + S-adenosyl-L-homocysteine. The enzyme catalyses adenosine(37) in tRNA + 2 reduced [2Fe-2S]-[ferredoxin] + 2 S-adenosyl-L-methionine = 2-methyladenosine(37) in tRNA + 5'-deoxyadenosine + L-methionine + 2 oxidized [2Fe-2S]-[ferredoxin] + S-adenosyl-L-homocysteine. In terms of biological role, specifically methylates position 2 of adenine 2503 in 23S rRNA and position 2 of adenine 37 in tRNAs. m2A2503 modification seems to play a crucial role in the proofreading step occurring at the peptidyl transferase center and thus would serve to optimize ribosomal fidelity. The sequence is that of Dual-specificity RNA methyltransferase RlmN from Jannaschia sp. (strain CCS1).